The chain runs to 385 residues: Rhomboid domain-containing protein 3 (385 aa).

5 helical membrane-spanning segments follow: residues 13 to 33, 58 to 78, 95 to 115, 146 to 166, and 168 to 188; these read ALPLASSVLMLLLSCLWLLGA, LGHTALPGLLLSLLLLPTLGW, VLALATGLLAVLLAGLGVSGA, WLLPWLLLALTLLLSSEPPFL, and LLCGLLTGLAYAAGAFQWLEL. The disordered stretch occupies residues 238–264; that stretch reads PPYLASSDSWPHSDGSAQLPPRLGPGQ. Residues 322–361 enclose the UBA domain; the sequence is SVSSLRLQQLQHMGFPTEQAAVALAATGRVEGAVSLLVEG.

It is found in the membrane. This Mus musculus (Mouse) protein is Rhomboid domain-containing protein 3 (Rhbdd3).